The chain runs to 187 residues: Protein GrpE (187 aa).

Positions 1 to 26 (MHDPKESLETNIQETESQEKLPETPI) are disordered.

The protein belongs to the GrpE family. As to quaternary structure, homodimer.

The protein localises to the cytoplasm. Participates actively in the response to hyperosmotic and heat shock by preventing the aggregation of stress-denatured proteins, in association with DnaK and GrpE. It is the nucleotide exchange factor for DnaK and may function as a thermosensor. Unfolded proteins bind initially to DnaJ; upon interaction with the DnaJ-bound protein, DnaK hydrolyzes its bound ATP, resulting in the formation of a stable complex. GrpE releases ADP from DnaK; ATP binding to DnaK triggers the release of the substrate protein, thus completing the reaction cycle. Several rounds of ATP-dependent interactions between DnaJ, DnaK and GrpE are required for fully efficient folding. This is Protein GrpE from Dichelobacter nodosus (strain VCS1703A).